The primary structure comprises 95 residues: Protein TusB (95 aa).

Belongs to the DsrH/TusB family. In terms of assembly, heterohexamer, formed by a dimer of trimers. The hexameric TusBCD complex contains 2 copies each of TusB, TusC and TusD. The TusBCD complex interacts with TusE.

It localises to the cytoplasm. Part of a sulfur-relay system required for 2-thiolation of 5-methylaminomethyl-2-thiouridine (mnm(5)s(2)U) at tRNA wobble positions. The sequence is that of Protein TusB from Buchnera aphidicola subsp. Acyrthosiphon pisum (strain 5A).